We begin with the raw amino-acid sequence, 305 residues long: Fumarylacetoacetate hydrolase domain-containing protein 2 homolog (305 aa).

E141, E143, and D172 together coordinate a divalent metal cation.

It belongs to the FAH family. Ca(2+) serves as cofactor. Requires Mg(2+) as cofactor.

Functionally, may have hydrolase activity. This is Fumarylacetoacetate hydrolase domain-containing protein 2 homolog (fahd2) from Dictyostelium discoideum (Social amoeba).